We begin with the raw amino-acid sequence, 336 residues long: Dihydroorotate dehydrogenase (quinone) (336 aa).

Residues 62–66 (AGMDK) and threonine 86 each bind FMN. Lysine 66 is a substrate binding site. 111–115 (NRMGF) contributes to the substrate binding site. Residues asparagine 139 and asparagine 172 each coordinate FMN. Asparagine 172 serves as a coordination point for substrate. The Nucleophile role is filled by serine 175. Asparagine 177 is a binding site for substrate. FMN-binding residues include lysine 217 and threonine 245. A substrate-binding site is contributed by 246 to 247 (NT). FMN-binding positions include glycine 268, glycine 297, and 318–319 (YS).

The protein belongs to the dihydroorotate dehydrogenase family. Type 2 subfamily. In terms of assembly, monomer. It depends on FMN as a cofactor.

It is found in the cell membrane. It catalyses the reaction (S)-dihydroorotate + a quinone = orotate + a quinol. Its pathway is pyrimidine metabolism; UMP biosynthesis via de novo pathway; orotate from (S)-dihydroorotate (quinone route): step 1/1. Its function is as follows. Catalyzes the conversion of dihydroorotate to orotate with quinone as electron acceptor. The chain is Dihydroorotate dehydrogenase (quinone) from Buchnera aphidicola subsp. Schizaphis graminum (strain Sg).